Here is a 221-residue protein sequence, read N- to C-terminus: MWSAGRGGAAWPVLLGLLLALLVPGGGAAKTGAELVTCGSVLKLLNTHHRVRLHSHDIKYGSGSGQQSVTGVEASDDANSYWRIRGGSEGGCPRGSPVRCGQAVRLTHVLTGKNLHTHHFPSPLSNNQEVSAFGEDGEGDDLDLWTVRCSGQHWEREAAVRFQHVGTSVFLSVTGEQYGSPIRGQHEVHGMPSANTHNTWKAMEGIFIKPSVEPSAGHDEL.

Positions Met1–Ala28 are cleaved as a signal peptide. 3 MIR domains span residues Ala33 to Gly87, Gly95 to Ser150, and Gly151 to Gly205. Ser215 carries the post-translational modification Phosphoserine. The Prevents secretion from ER signature appears at His218–Leu221.

As to quaternary structure, part of a large chaperone multiprotein complex comprising CABP1, DNAJB11, HSP90B1, HSPA5, HYOU, PDIA2, PDIA4, PPIB, SDF2L1, UGGT1 and very small amounts of ERP29, but not, or at very low levels, CALR nor CANX. As to expression, ubiquitously expressed with high expression in testis, moderate expression in the pancreas, spleen, prostate, small intestine and colon. Very low expression is seen in brain and skeletal muscle.

It is found in the endoplasmic reticulum lumen. The chain is Stromal cell-derived factor 2-like protein 1 (SDF2L1) from Homo sapiens (Human).